We begin with the raw amino-acid sequence, 554 residues long: Inactive sesquithujene synthase B (554 aa).

Residues Asp308 and Asp312 each coordinate Mg(2+). Residues Asp308, Asp312, Arg449, and Asn452 each coordinate substrate. The DDXXD motif signature appears at 308 to 312 (DDMFD). Positions 452, 456, and 460 each coordinate Mg(2+).

It belongs to the terpene synthase family. In terms of assembly, monomer. Mg(2+) serves as cofactor. Requires Mn(2+) as cofactor.

The protein resides in the cytoplasm. It participates in secondary metabolite biosynthesis; terpenoid biosynthesis. In terms of biological role, non-functional sesquiterpene synthase having less than 1% of the activity found in TPS5A. In Zea mays (Maize), this protein is Inactive sesquithujene synthase B.